Reading from the N-terminus, the 764-residue chain is PFL-like enzyme TdcE (764 aa).

One can recognise a PFL domain in the interval 7–629; that stretch reads TSDKLYADAW…KTGNTPDGRR (623 aa). The active-site S-acetylcysteine intermediate is the Cys423. Cys424 serves as the catalytic Cysteine radical intermediate. The interval 622–645 is disordered; the sequence is GNTPDGRRAGTPFAPGANPMHGRD. In terms of domain architecture, Glycine radical spans 636–764; sequence PGANPMHGRD…VISRTFTQAL (129 aa). Gly739 bears the Glycine radical mark.

It belongs to the glycyl radical enzyme (GRE) family. PFL subfamily.

It is found in the cytoplasm. The enzyme catalyses 2-oxobutanoate + CoA = propanoyl-CoA + formate. The catalysed reaction is formate + acetyl-CoA = pyruvate + CoA. Its pathway is amino-acid degradation; L-threonine degradation via propanoate pathway; propanoate from L-threonine: step 2/4. Dependent on PFL-activase. Functionally, catalyzes the cleavage of 2-ketobutyrate to propionyl-CoA and formate. It can also use pyruvate as substrate. The chain is PFL-like enzyme TdcE (tdcE) from Escherichia coli (strain K12).